The primary structure comprises 839 residues: LPS-assembly protein LptD (839 aa).

The N-terminal stretch at Met-1–Ser-21 is a signal peptide.

It belongs to the LptD family. As to quaternary structure, component of the lipopolysaccharide transport and assembly complex. Interacts with LptE and LptA.

The protein resides in the cell outer membrane. Its function is as follows. Together with LptE, is involved in the assembly of lipopolysaccharide (LPS) at the surface of the outer membrane. This chain is LPS-assembly protein LptD, found in Legionella pneumophila (strain Lens).